The primary structure comprises 167 residues: N-alpha-acetyltransferase (167 aa).

An N-acetyltransferase domain is found at 12-167 (YRIRNARLTD…EDAYLMAAPL (156 aa)). A substrate-binding site is contributed by Tyr-37. His-88 serves as a coordination point for Zn(2+). Acetyl-CoA is bound by residues 92–94 (IAV) and 100–105 (RLGIGT). Residue Glu-127 coordinates Zn(2+). Residues Asn-132 and 139-141 (YKK) each bind acetyl-CoA. Tyr-154 is a binding site for substrate.

Belongs to the acetyltransferase family. ARD1 subfamily. Homodimer.

It is found in the cytoplasm. It carries out the reaction N-terminal L-alanyl-[protein] + acetyl-CoA = N-terminal N(alpha)-acetyl-L-alanyl-[protein] + CoA + H(+). It catalyses the reaction N-terminal L-seryl-[protein] + acetyl-CoA = N-terminal N(alpha)-acetyl-L-seryl-[protein] + CoA + H(+). The enzyme catalyses N-terminal L-methionyl-L-leucyl-[protein] + acetyl-CoA = N-terminal N(alpha)-acetyl-L-methionyl-L-leucyl-[protein] + CoA + H(+). The catalysed reaction is N-terminal L-methionyl-L-glutamyl-[protein] + acetyl-CoA = N-terminal N(alpha)-acetyl-L-methionyl-L-glutamyl-[protein] + CoA + H(+). Its function is as follows. Displays alpha (N-terminal) acetyltransferase activity. Catalyzes the covalent attachment of an acetyl moiety from acetyl-CoA to the free alpha-amino group at the N-terminus of a protein. The polypeptide is N-alpha-acetyltransferase (Sulfurisphaera tokodaii (strain DSM 16993 / JCM 10545 / NBRC 100140 / 7) (Sulfolobus tokodaii)).